Here is a 170-residue protein sequence, read N- to C-terminus: uncharacterized protein (170 aa).

This is an uncharacterized protein from Saccharomyces cerevisiae (strain ATCC 204508 / S288c) (Baker's yeast).